A 94-amino-acid chain; its full sequence is Co-chaperonin GroES (94 aa).

Belongs to the GroES chaperonin family. Heptamer of 7 subunits arranged in a ring. Interacts with the chaperonin GroEL.

Its subcellular location is the cytoplasm. Its function is as follows. Together with the chaperonin GroEL, plays an essential role in assisting protein folding. The GroEL-GroES system forms a nano-cage that allows encapsulation of the non-native substrate proteins and provides a physical environment optimized to promote and accelerate protein folding. GroES binds to the apical surface of the GroEL ring, thereby capping the opening of the GroEL channel. This Clostridioides difficile (strain 630) (Peptoclostridium difficile) protein is Co-chaperonin GroES.